A 519-amino-acid chain; its full sequence is GATA zinc finger domain-containing protein 8 (519 aa).

4 disordered regions span residues 25-182 (YSTG…SSSG), 198-249 (SNIN…SNNT), 273-359 (SNNM…NNKQ), and 431-453 (DERQ…KRRE). The segment covering 37 to 156 (TNNSQNKTNN…SSSITSPSSN (120 aa)) has biased composition (low complexity). Over residues 172-182 (SPNNKQVSSSG) the composition is skewed to polar residues. Positions 273–357 (SNNMNINNQH…SNINNNNNNN (85 aa)) are enriched in low complexity. A coiled-coil region spans residues 429–461 (KTDERQQKKRMESDKNAEKREKRREASRLLNNV). The GATA-type zinc finger occupies 462–487 (CRNCKTTETPEWRKGPDGTKSLCNAC).

The polypeptide is GATA zinc finger domain-containing protein 8 (gtaH) (Dictyostelium discoideum (Social amoeba)).